A 407-amino-acid chain; its full sequence is uncharacterized protein (407 aa).

Disordered regions lie at residues 1–64 (MSRK…EPFD), 110–276 (GFGP…YPQF), and 314–341 (QSRP…HNNP). Polar residues predominate over residues 7-32 (KQSNPKRNYKNDNYFQENSYTMTNGF). Residues 33 to 44 (TKDKDGKPVEFK) are compositionally biased toward basic and acidic residues. Positions 122–137 (DSDSEYSDECLTDECS) are enriched in acidic residues. Composition is skewed to polar residues over residues 138–147 (DNYNKQSTDS) and 184–201 (NFDN…NSQP). Residues 209–231 (SKSSSKSSKSNKSNKSSKSNKSS) are compositionally biased toward low complexity. Over residues 232–246 (KSSKSKSNKHSKHKN) the composition is skewed to basic residues. The span at 247–258 (KSDSSSDSDEKT) shows a compositional bias: basic and acidic residues. Basic residues-rich tracts occupy residues 259–270 (HKHKDRRHRRGR) and 316–341 (RPRK…HNNP).

This is an uncharacterized protein from Acanthamoeba polyphaga mimivirus (APMV).